Consider the following 193-residue polypeptide: ATP-dependent Clp protease proteolytic subunit (193 aa).

Serine 98 functions as the Nucleophile in the catalytic mechanism. The active site involves histidine 123.

It belongs to the peptidase S14 family. As to quaternary structure, fourteen ClpP subunits assemble into 2 heptameric rings which stack back to back to give a disk-like structure with a central cavity, resembling the structure of eukaryotic proteasomes.

It is found in the cytoplasm. It catalyses the reaction Hydrolysis of proteins to small peptides in the presence of ATP and magnesium. alpha-casein is the usual test substrate. In the absence of ATP, only oligopeptides shorter than five residues are hydrolyzed (such as succinyl-Leu-Tyr-|-NHMec, and Leu-Tyr-Leu-|-Tyr-Trp, in which cleavage of the -Tyr-|-Leu- and -Tyr-|-Trp bonds also occurs).. Its function is as follows. Cleaves peptides in various proteins in a process that requires ATP hydrolysis. Has a chymotrypsin-like activity. Plays a major role in the degradation of misfolded proteins. The protein is ATP-dependent Clp protease proteolytic subunit of Pasteurella multocida (strain Pm70).